Here is a 509-residue protein sequence, read N- to C-terminus: Bifunctional pantoate ligase/cytidylate kinase (509 aa).

Positions 1–275 are pantoate--beta-alanine ligase; sequence MKKLIIRKTE…CGETRLIDHV (275 aa). 29–36 contacts ATP; it reads MGNLHDGH. H36 (proton donor) is an active-site residue. A (R)-pantoate-binding site is contributed by Q61. Q61 is a binding site for beta-alanine. Residue 149–152 participates in ATP binding; it reads GEKD. Q155 contacts (R)-pantoate. 186-189 provides a ligand contact to ATP; the sequence is LSSR. Positions 276–509 are cytidylate kinase; sequence FLMKRRPIIA…DKIPKESEIK (234 aa).

In the N-terminal section; belongs to the pantothenate synthetase family. The protein in the C-terminal section; belongs to the cytidylate kinase family. Type 1 subfamily.

The protein resides in the cytoplasm. It catalyses the reaction (R)-pantoate + beta-alanine + ATP = (R)-pantothenate + AMP + diphosphate + H(+). The enzyme catalyses CMP + ATP = CDP + ADP. The catalysed reaction is dCMP + ATP = dCDP + ADP. The protein operates within cofactor biosynthesis; (R)-pantothenate biosynthesis; (R)-pantothenate from (R)-pantoate and beta-alanine: step 1/1. Functionally, catalyzes the condensation of pantoate with beta-alanine in an ATP-dependent reaction via a pantoyl-adenylate intermediate. Its function is as follows. Catalyzes the transfer of a phosphate group from ATP to either CMP or dCMP to form CDP or dCDP and ADP, respectively. In Prochlorococcus marinus (strain AS9601), this protein is Bifunctional pantoate ligase/cytidylate kinase.